Reading from the N-terminus, the 257-residue chain is NAD-capped RNA hydrolase NudC (257 aa).

Arg69 serves as a coordination point for substrate. Cys98 and Cys101 together coordinate Zn(2+). Position 111 (Glu111) interacts with substrate. Residues Cys116 and Cys119 each contribute to the Zn(2+) site. Position 124 (Tyr124) interacts with substrate. The 124-residue stretch at 125-248 folds into the Nudix hydrolase domain; the sequence is PQIAPCIIVA…TVARRLIEDT (124 aa). A divalent metal cation is bound by residues Ala158, Glu174, and Glu178. The short motif at 159-180 is the Nudix box element; it reads GFVEVGETLEQAVAREVMEESG. Residue 192–199 coordinates substrate; the sequence is QPWPFPQS. Residue Glu219 participates in a divalent metal cation binding. Ala241 provides a ligand contact to substrate.

It belongs to the Nudix hydrolase family. NudC subfamily. In terms of assembly, homodimer. It depends on Mg(2+) as a cofactor. Mn(2+) is required as a cofactor. The cofactor is Zn(2+).

It carries out the reaction a 5'-end NAD(+)-phospho-ribonucleoside in mRNA + H2O = a 5'-end phospho-adenosine-phospho-ribonucleoside in mRNA + beta-nicotinamide D-ribonucleotide + 2 H(+). The enzyme catalyses NAD(+) + H2O = beta-nicotinamide D-ribonucleotide + AMP + 2 H(+). It catalyses the reaction NADH + H2O = reduced beta-nicotinamide D-ribonucleotide + AMP + 2 H(+). In terms of biological role, mRNA decapping enzyme that specifically removes the nicotinamide adenine dinucleotide (NAD) cap from a subset of mRNAs by hydrolyzing the diphosphate linkage to produce nicotinamide mononucleotide (NMN) and 5' monophosphate mRNA. The NAD-cap is present at the 5'-end of some mRNAs and stabilizes RNA against 5'-processing. Has preference for mRNAs with a 5'-end purine. Catalyzes the hydrolysis of a broad range of dinucleotide pyrophosphates. The polypeptide is NAD-capped RNA hydrolase NudC (Klebsiella pneumoniae (strain 342)).